A 1397-amino-acid polypeptide reads, in one-letter code: DNA-directed RNA polymerase subunit beta' (1397 aa).

Positions 71, 73, 86, and 89 each coordinate Zn(2+). Residues D462, D464, and D466 each contribute to the Mg(2+) site. C811, C885, C892, and C895 together coordinate Zn(2+). The disordered stretch occupies residues 1368 to 1397 (QNRDDKILEDQGGATPTASTEIKEPAEGAA). The span at 1388 to 1397 (EIKEPAEGAA) shows a compositional bias: basic and acidic residues.

The protein belongs to the RNA polymerase beta' chain family. In terms of assembly, the RNAP catalytic core consists of 2 alpha, 1 beta, 1 beta' and 1 omega subunit. When a sigma factor is associated with the core the holoenzyme is formed, which can initiate transcription. Mg(2+) is required as a cofactor. It depends on Zn(2+) as a cofactor.

The enzyme catalyses RNA(n) + a ribonucleoside 5'-triphosphate = RNA(n+1) + diphosphate. Its function is as follows. DNA-dependent RNA polymerase catalyzes the transcription of DNA into RNA using the four ribonucleoside triphosphates as substrates. This Parvibaculum lavamentivorans (strain DS-1 / DSM 13023 / NCIMB 13966) protein is DNA-directed RNA polymerase subunit beta'.